Consider the following 398-residue polypeptide: uncharacterized protein (398 aa).

10 helical membrane passes run 43 to 65 (PILP…VGGL), 89 to 108 (IFVV…LGLS), 156 to 173 (TAGA…ILYL), 180 to 198 (IILI…LYFV), 224 to 246 (LFIL…ILRA), 259 to 281 (IIIP…IPFG), 291 to 311 (SVLT…AYFI), 316 to 338 (LILL…KAYV), 351 to 373 (LGLF…GYLW), and 380 to 397 (TFLY…LLLF).

The protein belongs to the major facilitator superfamily.

The protein localises to the cell membrane. This is an uncharacterized protein from Methanocaldococcus jannaschii (strain ATCC 43067 / DSM 2661 / JAL-1 / JCM 10045 / NBRC 100440) (Methanococcus jannaschii).